Reading from the N-terminus, the 711-residue chain is MSKNLVVIESPNKVKTLQKYLPNDFEIVSTIGHIREMVHKNFGFNEADYSPVWEDWTKSKKKFSSLSFKGNLKGKKLLSKYDIIKSIKEKASKATNIYLATDPDREGEAISWHVYDVLDEKDKSKCQRITFNEITKNAVLDALKNPREIDQSWVQSQFARQILDRMIGFRLSRLLNNYLSAKSAGRVQSVALRFLEEREQEIRSFVPRFWWTLDVLLNPKAEGVREACANRSIPIVLREINPALRAGLKFEEEKSVSGIDFLDEASAKKFGEQLKGVFEVYNIDETKHYSSSPNSAYTTASLQKDAINKLGWSSKKVTLIAQHLYEGVSINGEQTALISYPRTDSTRLSAQFQQSCKEYILNHYGEKYLSNRIVSAKGKKGEKIIQDAHEAIHPTDINITPEMVKNAIKKDEFLLYRLIWIRTVASLMADCKKSHTHIRFINDGNKFYASSKSLVFDGYRKIYEHFENKESNDLYIDLDKIRVGDRFMAKDIKITARQTHPAARYTQASLIEALEKSNIGRPSTYNTMASVNLDRGYASLNKHAFHVTQLGEQVNEELSKHFGKIINKEFTKNMEKSLDEIAENKKNYQEFLRDFWSNFKEEVKLAEGSIQRVKKEKEFVGRDCPSCASPLLYRYTKRGNEKFVGCSNFPNCKYNEFSQNKPNLTLEKLEELCPECNSQLVKRRTKFNPNKTFVGCSNFPRCRYIKKDNAS.

Positions 3–134 constitute a Toprim domain; that stretch reads KNLVVIESPN…KCQRITFNEI (132 aa). Residues Glu9 and Asp102 each coordinate Mg(2+). In terms of domain architecture, Topo IA-type catalytic spans 150 to 604; it reads DQSWVQSQFA…FWSNFKEEVK (455 aa). Residues 183 to 188 are interaction with DNA; sequence SAGRVQ. The O-(5'-phospho-DNA)-tyrosine intermediate role is filled by Tyr340. 2 consecutive C4-type zinc fingers follow at residues 624–652 and 673–702; these read CPSC…FPNC and CPEC…FPRC.

This sequence belongs to the type IA topoisomerase family. As to quaternary structure, monomer. Requires Mg(2+) as cofactor.

It catalyses the reaction ATP-independent breakage of single-stranded DNA, followed by passage and rejoining.. Its function is as follows. Releases the supercoiling and torsional tension of DNA, which is introduced during the DNA replication and transcription, by transiently cleaving and rejoining one strand of the DNA duplex. Introduces a single-strand break via transesterification at a target site in duplex DNA. The scissile phosphodiester is attacked by the catalytic tyrosine of the enzyme, resulting in the formation of a DNA-(5'-phosphotyrosyl)-enzyme intermediate and the expulsion of a 3'-OH DNA strand. The free DNA strand then undergoes passage around the unbroken strand, thus removing DNA supercoils. Finally, in the religation step, the DNA 3'-OH attacks the covalent intermediate to expel the active-site tyrosine and restore the DNA phosphodiester backbone. This Mycoplasma pneumoniae (strain ATCC 29342 / M129 / Subtype 1) (Mycoplasmoides pneumoniae) protein is DNA topoisomerase 1.